We begin with the raw amino-acid sequence, 673 residues long: UvrABC system protein B (673 aa).

The Helicase ATP-binding domain occupies 24 to 182 (EGVERNDPAQ…YSFVEILYNR (159 aa)). 37 to 44 (GVTGSGKT) is a binding site for ATP. The Beta-hairpin signature appears at 90–113 (YYDYYQPEAFMPTSGLYIEKDLAI). Positions 429–591 (QIDDLLDEIQ…ITPITVNKSK (163 aa)) constitute a Helicase C-terminal domain. Positions 634-669 (TKMIDRAKKDMDKAAKDLDFVEAARYRDEMFALQKI) constitute a UVR domain.

Belongs to the UvrB family. Forms a heterotetramer with UvrA during the search for lesions. Interacts with UvrC in an incision complex.

It localises to the cytoplasm. The UvrABC repair system catalyzes the recognition and processing of DNA lesions. A damage recognition complex composed of 2 UvrA and 2 UvrB subunits scans DNA for abnormalities. Upon binding of the UvrA(2)B(2) complex to a putative damaged site, the DNA wraps around one UvrB monomer. DNA wrap is dependent on ATP binding by UvrB and probably causes local melting of the DNA helix, facilitating insertion of UvrB beta-hairpin between the DNA strands. Then UvrB probes one DNA strand for the presence of a lesion. If a lesion is found the UvrA subunits dissociate and the UvrB-DNA preincision complex is formed. This complex is subsequently bound by UvrC and the second UvrB is released. If no lesion is found, the DNA wraps around the other UvrB subunit that will check the other stand for damage. The polypeptide is UvrABC system protein B (Cytophaga hutchinsonii (strain ATCC 33406 / DSM 1761 / CIP 103989 / NBRC 15051 / NCIMB 9469 / D465)).